The primary structure comprises 477 residues: Calcium uptake protein 1, mitochondrial (477 aa).

Residues 1–33 constitute a mitochondrion transit peptide; the sequence is MFRLNTLSALAELAVGSRWYHGASQPTQTKRRL. The segment at 57 to 107 is disordered; it reads AESPPCVNSKKPDTEDKERNKDSGEVSSREGRAADAAAEPYPEDKKKKRSG. The segment covering 66-89 has biased composition (basic and acidic residues); sequence KKPDTEDKERNKDSGEVSSREGRA. The tract at residues 101-112 is polybasic region; the sequence is KKKKRSGFRDRK. Serine 124 bears the Phosphoserine; by PKB mark. Positions 128–131 are k/R-ring; it reads KIFR. The EF-hand 1 domain maps to 220–255; sequence TPQRNFEIAFKMFDLNGDGEVDMEEFEQVQSIIRSQ. Ca(2+) is bound by residues aspartate 233, asparagine 235, aspartate 237, glutamate 239, and glutamate 244. Positions 261–265 are k/R-ring; that stretch reads RHRDR. An EF-hand 2; degenerate domain is found at 356–376; sequence KDGKGLTFQEVENFFTFLKNI. Residues 410–445 enclose the EF-hand 3 domain; the sequence is LSDHVCDVVFALFDCDGNGELSNKEFVSIMKQRLMR. Ca(2+) contacts are provided by aspartate 423, aspartate 425, asparagine 427, glutamate 429, and glutamate 434. Arginine 457 is subject to Asymmetric dimethylarginine. The tract at residues 457–467 is C-helix region; sequence RLMQAMWKCAQ.

The protein belongs to the MICU1 family. MICU1 subfamily. Heterodimer; disulfide-linked; heterodimerizes with MICU2 or MICU3. Homodimer; disulfide-linked. Component of the uniplex complex, composed of MCU, EMRE/SMDT1, MICU1 and MICU2 (or MICU3) in a 4:4:1:1 stoichiometry. The composition of calcium sensors within the uniplex complex can differ depending on tissues: a MICU1 homodimer can be present instead of the MICU1-MICU2 heterodimer in skeletal-muscle and kidney. MICU1 is recruited to the uniplex complex by EMRE/SMDT1, and it associates with MCU at low calcium levels, occluding the pore of the MCU channel. Associates with the MICOS complex. Interacts with SLC25A23. Interacts with CHCHD4/MIA40; which introduces the interchain disulfide bond with MICU2. Interacts (when methylated) with UCP2; leading to decrease the calcium sensitivity of MICU1. In terms of assembly, heterodimer; disulfide-linked; heterodimerizes with MICU2 or MICU3. Heterodimerizes with MICU3 in skeletal muscle. Component of the uniplex complex, composed of MCU, EMRE/SMDT1, MICU1 and MICU2 (or MICU3) in a 4:4:1:1 stoichiometry. Also localizes to mitochondrial cristae junctions. Phosphorylation at Ser-124 by AKT1 impairs its maturation and stability. Post-translationally, asymmetric dimethylation at Arg-457 by PRMT1 decreases the calcium sensitivity of MICU1 by promoting interaction with UCP2. In terms of processing, degraded by YME1L1 when not complexed as homodimer or heterodimer. Not degraded when complexed as homodimer or heterodimer; the presence of the interchain disulfide bond protecting MICU1 from degradation by YME1L1. As to expression, expressed in skeletal muscle, heart, kidney, liver, brain, lung, fat and spleen. Specifically expressed in the skeletal muscle.

The protein resides in the mitochondrion intermembrane space. It is found in the mitochondrion inner membrane. Functionally, calcium sensor of the mitochondrial calcium uniporter (MCU) channel, which senses calcium level via its EF-hand domains. MICU1 and MICU2 (or MICU3) form a disulfide-linked heterodimer that stimulates and inhibits MCU activity, depending on the concentration of calcium. At low calcium levels, MICU1 occludes the pore of the MCU channel, preventing mitochondrial calcium uptake. At higher calcium levels, calcium-binding to MICU1 and MICU2 (or MICU3) induces a conformational change that weakens MCU-MICU1 interactions and moves the MICU1-MICU2 heterodimer away from the pore, allowing calcium permeation through the MCU channel. Also required to protect against manganese toxicity by preventing manganese uptake by MCU: mechanistically, manganese-binding to its EF-hand domains does not induce any conformational change, maintaining MCU pore occlusion. Acts as a regulator of mitochondrial cristae structure independently of its ability to regulate the mitochondrial calcium uniporter channel. Regulates glucose-dependent insulin secretion in pancreatic beta-cells by regulating mitochondrial calcium uptake. Induces T-helper 1-mediated autoreactivity, which is accompanied by the release of IFNG. In terms of biological role, isoform that regulates mitochondrial calcium uniporter (MCU) in the skeletal muscle. Compared to other isoforms, this isoform has higher affinity for calcium, promoting mitochondrial calcium uptake at lower calcium concentrations. This allows a rapid response of mitochondrial metabolism and ensures sustained ATP production needed for resistance and strenuous exercise. In Mus musculus (Mouse), this protein is Calcium uptake protein 1, mitochondrial.